The following is a 250-amino-acid chain: Tail assembly protein GT (250 aa).

Belongs to the lambda-like tail assembly protein family. Interacts (via C-terminus) with tail tube protein. Interacts (via N-terminus) with the tail assembly protein G and the tape measure protein.

The protein resides in the host cytoplasm. Functionally, promotes tail assembly by creating a scaffold for the tail tube proteins. Tail assembly proteins G and GT probably wrap the linear tape measure protein to create a tail assembly scaffold. This allows the polymerization of the tail tube protein, during which G and GT are released, therefore they are absent in the mature virion. The tail assembly protein GT is produced by a rare -1 ribosomal frameshift. The ratio of translated G/GT is about 20, and this ratio is important for proper tail assembly. This Escherichia coli (Bacteriophage N15) protein is Tail assembly protein GT.